A 72-amino-acid chain; its full sequence is Translation initiation factor IF-1 1 (72 aa).

The region spanning 1–72 is the S1-like domain; sequence MSKEDVIQMQ…TKGRIVFRAK (72 aa).

The protein belongs to the IF-1 family. In terms of assembly, component of the 30S ribosomal translation pre-initiation complex which assembles on the 30S ribosome in the order IF-2 and IF-3, IF-1 and N-formylmethionyl-tRNA(fMet); mRNA recruitment can occur at any time during PIC assembly.

The protein resides in the cytoplasm. In terms of biological role, one of the essential components for the initiation of protein synthesis. Stabilizes the binding of IF-2 and IF-3 on the 30S subunit to which N-formylmethionyl-tRNA(fMet) subsequently binds. Helps modulate mRNA selection, yielding the 30S pre-initiation complex (PIC). Upon addition of the 50S ribosomal subunit IF-1, IF-2 and IF-3 are released leaving the mature 70S translation initiation complex. This chain is Translation initiation factor IF-1 1, found in Thiobacillus denitrificans (strain ATCC 25259 / T1).